The primary structure comprises 370 residues: Cytochrome b (370 aa).

A run of 4 helical transmembrane segments spans residues 25–45 (FGSM…FLAV), 69–90 (WLMQ…YIHI), 105–125 (WLSG…GYVL), and 170–190 (FFAL…LHVM). The heme b site is built by histidine 75 and histidine 89. Residues histidine 174 and histidine 188 each contribute to the heme b site. Histidine 193 lines the a ubiquinone pocket. 4 consecutive transmembrane segments (helical) span residues 218–238 (YKDL…VSFS), 280–300 (LGGA…PFTH), 312–332 (FMQM…WTAT), and 339–358 (FTLI…ISNP).

The protein belongs to the cytochrome b family. In terms of assembly, the cytochrome bc1 complex contains 3 respiratory subunits (MT-CYB, CYC1 and UQCRFS1), 2 core proteins (UQCRC1 and UQCRC2) and probably 6 low-molecular weight proteins. It depends on heme b as a cofactor.

The protein localises to the mitochondrion inner membrane. Component of the ubiquinol-cytochrome c reductase complex (complex III or cytochrome b-c1 complex) that is part of the mitochondrial respiratory chain. The b-c1 complex mediates electron transfer from ubiquinol to cytochrome c. Contributes to the generation of a proton gradient across the mitochondrial membrane that is then used for ATP synthesis. This Eunectes notaeus (Yellow anaconda) protein is Cytochrome b (MT-CYB).